Reading from the N-terminus, the 2376-residue chain is Protein Ycf2 (2376 aa).

3 disordered regions span residues 173 to 194 (SSQL…GTED), 226 to 256 (TEIE…EMNN), and 952 to 1011 (KRKK…KRKE). Low complexity predominate over residues 235–245 (KGLSGSSSKSR). 2 stretches are compositionally biased toward basic and acidic residues: residues 246 to 255 (LFTEGEKEMN) and 960 to 1009 (KRKE…PEKR). 1441 to 1448 (GSIGSGRS) lines the ATP pocket. Disordered stretches follow at residues 1515–1534 (YEDR…DYEP), 1860–2046 (LVGS…LRPK), and 2112–2230 (PAEE…DGFS). Residues 1866–2025 (TEEEVEGTEE…GEGTEDEEGE (160 aa)) are compositionally biased toward acidic residues. A compositionally biased stretch (basic and acidic residues) spans 2026 to 2038 (GTEKDSSQFDNDR). 2 stretches are compositionally biased toward acidic residues: residues 2112-2129 (PAEE…EALE) and 2136-2213 (GEEE…ENDS).

This sequence belongs to the Ycf2 family.

The protein resides in the plastid. It is found in the chloroplast stroma. Its function is as follows. Probable ATPase of unknown function. Its presence in a non-photosynthetic plant (Epifagus virginiana) and experiments in tobacco indicate that it has an essential function which is probably not related to photosynthesis. The sequence is that of Protein Ycf2 from Oenothera glazioviana (Large-flowered evening primrose).